The sequence spans 379 residues: Muconate cycloisomerase 1-1 (379 aa).

Lysine 169 is an active-site residue. Positions 198, 224, and 247 each coordinate Mn(2+).

The protein belongs to the mandelate racemase/muconate lactonizing enzyme family. In terms of assembly, homooctamer. Mn(2+) is required as a cofactor.

The enzyme catalyses (S)-muconolactone = cis,cis-muconate + H(+). The protein operates within aromatic compound metabolism; beta-ketoadipate pathway; 5-oxo-4,5-dihydro-2-furylacetate from catechol: step 2/3. Its function is as follows. Catalyzes a syn cycloisomerization. The polypeptide is Muconate cycloisomerase 1-1 (catB1) (Acinetobacter lwoffii).